The sequence spans 243 residues: UPF0246 protein M28_Spy1772 (243 aa).

Belongs to the UPF0246 family.

This is UPF0246 protein M28_Spy1772 from Streptococcus pyogenes serotype M28 (strain MGAS6180).